A 123-amino-acid polypeptide reads, in one-letter code: Glycine cleavage system H protein (123 aa).

Residues 22–104 (VATVGITSYA…FGAGWLVKVR (83 aa)) enclose the Lipoyl-binding domain. The residue at position 63 (Lys-63) is an N6-lipoyllysine.

The protein belongs to the GcvH family. In terms of assembly, the glycine cleavage system is composed of four proteins: P, T, L and H. (R)-lipoate is required as a cofactor.

Functionally, the glycine cleavage system catalyzes the degradation of glycine. The H protein shuttles the methylamine group of glycine from the P protein to the T protein. This Clavibacter sepedonicus (Clavibacter michiganensis subsp. sepedonicus) protein is Glycine cleavage system H protein.